A 205-amino-acid chain; its full sequence is Small ribosomal subunit protein uS4 (205 aa).

The interval 1-46 is disordered; that stretch reads MSKRHSAKYKIDRRMGENLWGRPKSPVNSRSYGPGQHGQRRKSKVS. The region spanning 94–154 is the S4 RNA-binding domain; that stretch reads SRLDAIVYRA…EKSRNMALVL (61 aa).

This sequence belongs to the universal ribosomal protein uS4 family. Part of the 30S ribosomal subunit. Contacts protein S5. The interaction surface between S4 and S5 is involved in control of translational fidelity.

Functionally, one of the primary rRNA binding proteins, it binds directly to 16S rRNA where it nucleates assembly of the body of the 30S subunit. In terms of biological role, with S5 and S12 plays an important role in translational accuracy. The sequence is that of Small ribosomal subunit protein uS4 from Caulobacter vibrioides (strain ATCC 19089 / CIP 103742 / CB 15) (Caulobacter crescentus).